The sequence spans 88 residues: Phosphocarrier protein HPr (88 aa).

Residues 1 to 88 (MVVKTVRVLN…RLFQNKFEEE (88 aa)) enclose the HPr domain. His-15 acts as the Pros-phosphohistidine intermediate in catalysis. A Phosphoserine; by HPrK/P modification is found at Ser-46.

This sequence belongs to the HPr family.

Its subcellular location is the cytoplasm. With respect to regulation, phosphorylation on Ser-46 inhibits the phosphoryl transfer from enzyme I to HPr. Functionally, general (non sugar-specific) component of the phosphoenolpyruvate-dependent sugar phosphotransferase system (sugar PTS). This major carbohydrate active-transport system catalyzes the phosphorylation of incoming sugar substrates concomitantly with their translocation across the cell membrane. The phosphoryl group from phosphoenolpyruvate (PEP) is transferred to the phosphoryl carrier protein HPr by enzyme I. Phospho-HPr then transfers it to the PTS EIIA domain. The chain is Phosphocarrier protein HPr (ptsH) from Treponema pallidum (strain Nichols).